The primary structure comprises 498 residues: ATP synthase subunit alpha, chloroplastic (498 aa).

170–177 contributes to the ATP binding site; it reads GDRQTGKT.

This sequence belongs to the ATPase alpha/beta chains family. As to quaternary structure, F-type ATPases have 2 components, CF(1) - the catalytic core - and CF(0) - the membrane proton channel. CF(1) has five subunits: alpha(3), beta(3), gamma(1), delta(1), epsilon(1). CF(0) has four main subunits: a, b, b' and c.

It localises to the plastid. It is found in the chloroplast thylakoid membrane. The catalysed reaction is ATP + H2O + 4 H(+)(in) = ADP + phosphate + 5 H(+)(out). Functionally, produces ATP from ADP in the presence of a proton gradient across the membrane. The alpha chain is a regulatory subunit. This Oltmannsiellopsis viridis (Marine flagellate) protein is ATP synthase subunit alpha, chloroplastic.